Consider the following 233-residue polypeptide: Pathogenesis-related thaumatin-like protein 3.2 (233 aa).

The signal sequence occupies residues 1-22 (MARAMHTVWIALVPTLFVFLQG). 8 cysteine pairs are disulfide-bonded: Cys36–Cys232, Cys77–Cys87, Cys92–Cys98, Cys145–Cys221, Cys151–Cys204, Cys159–Cys169, Cys173–Cys182, and Cys183–Cys191. Asn195 is a glycosylation site (N-linked (GlcNAc...) asparagine).

Belongs to the thaumatin family. As to expression, strongly expressed in roots and in female and male strobili, and, to a lower extent, in cotyledons, leaves, stems and pollen grains.

In terms of biological role, may be involved in disease resistance. This Cryptomeria japonica (Japanese cedar) protein is Pathogenesis-related thaumatin-like protein 3.2.